Reading from the N-terminus, the 680-residue chain is WD repeat-containing protein 48 homolog (680 aa).

8 WD repeats span residues 26–65 (QHRNGVNALQLDANNGKLYSAGRDAIIRVWNTRTDSSEKY), 71–110 (HHNDWVNDIVLCCNGRNLISASCDTTVKVWNAQKGFCMST), 113–152 (THRDYVQALAYAKDREQVASAGLDKAIFLWDVNTLTALTA), 164–203 (GSKDSIYSLAMNPSGTVIVSGSTENILRIWDPRTCMRSMK), 206–245 (GHTENVRCLVVSPDGNQVVSGSSDGTIKVWNLGQQRCVQT), 248–287 (VHKEGVWSLLMSENFQYIISGSRDRNIIVTEMRNPSNKTL), 290–329 (EEQAPVLSLGYNIDKTGVWATTWNSDIRCWKLPMYDRCTM), and 350–389 (KGGAAIKECAVLNDKRYIITKDSQDQVVVYDVLRVVKKEQ). A disordered region spans residues 592-616 (ETTPSGGNANNSLQNSQSDANSEGS).

Belongs to the WD repeat WDR48 family. As to quaternary structure, catalytic component of the Usp12-46 deubiquitylase complex consisting of Usp12-46, Wdr20 and Uaf1; regulatory subunit that, together wtih Wdr20, stabilizes Usp12-46. The Usp12-46 deubiquitylase complex associates with arr/arrow; the interaction leads to deubiquitination and stabilization of arr/arrow.

Regulatory component of the Usp12-46 deubiquitylase complex. activates deubiquitination by increasing the catalytic turnover without increasing the affinity of deubiquitinating enzymes for the substrate. The complex deubiquitylates the wg/wingless-signaling receptor arr/arrow, which stabilizes the receptor and increases its concentration at the cell surface; this enhances the sensitivity of cells to wg/wingless-signal stimulation. This increases the amplitude and spatial range of the signaling response to the wg/wingless morphogen gradient, facilitating the precise concentration-dependent regulation of its target genes. Together with Wdr20 and Usp12-46 required for wg/wingless-mediated signaling in the wing imaginal disc and for wg/wingless-dependent regulation of intestinal stem cell proliferation. In Drosophila erecta (Fruit fly), this protein is WD repeat-containing protein 48 homolog.